A 503-amino-acid chain; its full sequence is Glycerol kinase (503 aa).

Threonine 14 lines the ADP pocket. ATP-binding residues include threonine 14, threonine 15, and serine 16. Position 14 (threonine 14) interacts with sn-glycerol 3-phosphate. Residue arginine 18 coordinates ADP. Sn-glycerol 3-phosphate contacts are provided by arginine 84, glutamate 85, tyrosine 136, and aspartate 246. Residues arginine 84, glutamate 85, tyrosine 136, aspartate 246, and glutamine 247 each coordinate glycerol. ADP is bound by residues threonine 268 and glycine 311. ATP-binding residues include threonine 268, glycine 311, glutamine 315, and glycine 412. ADP is bound by residues glycine 412 and asparagine 416.

The protein belongs to the FGGY kinase family. Homotetramer and homodimer (in equilibrium). Heterodimer with EIIA-Glc. Binds 1 zinc ion per glycerol kinase EIIA-Glc dimer. The zinc ion is important for dimerization.

It carries out the reaction glycerol + ATP = sn-glycerol 3-phosphate + ADP + H(+). Its pathway is polyol metabolism; glycerol degradation via glycerol kinase pathway; sn-glycerol 3-phosphate from glycerol: step 1/1. Activity of this regulatory enzyme is affected by several metabolites. Allosterically and non-competitively inhibited by fructose 1,6-bisphosphate (FBP) and unphosphorylated phosphocarrier protein EIIA-Glc (III-Glc), an integral component of the bacterial phosphotransferase (PTS) system. Its function is as follows. Key enzyme in the regulation of glycerol uptake and metabolism. Catalyzes the phosphorylation of glycerol to yield sn-glycerol 3-phosphate. This chain is Glycerol kinase, found in Klebsiella pneumoniae (strain 342).